The chain runs to 63 residues: Anionic peptide 10.1 (63 aa).

The N-terminal stretch at 1–20 (MISRFCLLFLLVFVVSKIQA) is a signal peptide.

It belongs to the non-disulfide-bridged peptide (NDBP) superfamily. Long chain multifunctional peptide (group 2) family. Expressed by the venom gland.

Its subcellular location is the secreted. This is Anionic peptide 10.1 from Lychas mucronatus (Chinese swimming scorpion).